Reading from the N-terminus, the 80-residue chain is Small ribosomal subunit protein uS17c (80 aa).

The protein belongs to the universal ribosomal protein uS17 family. As to quaternary structure, part of the 30S ribosomal subunit.

Its subcellular location is the plastid. It is found in the chloroplast. One of the primary rRNA binding proteins, it binds specifically to the 5'-end of 16S ribosomal RNA. In Gracilaria tenuistipitata var. liui (Red alga), this protein is Small ribosomal subunit protein uS17c (rps17).